The sequence spans 103 residues: UPF0091 protein PH0944 (103 aa).

The protein belongs to the UPF0091 family.

The sequence is that of UPF0091 protein PH0944 from Pyrococcus horikoshii (strain ATCC 700860 / DSM 12428 / JCM 9974 / NBRC 100139 / OT-3).